Consider the following 159-residue polypeptide: Transcriptional repressor NrdR (159 aa).

The span at 1–11 shows a compositional bias: polar residues; it reads MQCPTCQNTDS. The interval 1-21 is disordered; the sequence is MQCPTCQNTDSRVLESRSADS. The segment at 3–34 is a zinc-finger region; sequence CPTCQNTDSRVLESRSADSGKSVRRRRECLNC. The ATP-cone domain maps to 49–139; the sequence is VSVLKKDGGR…VYRKFNGVKD (91 aa).

Belongs to the NrdR family. Zn(2+) serves as cofactor.

Its function is as follows. Negatively regulates transcription of bacterial ribonucleotide reductase nrd genes and operons by binding to NrdR-boxes. The chain is Transcriptional repressor NrdR from Prochlorococcus marinus (strain AS9601).